Reading from the N-terminus, the 200-residue chain is MDRTGIFAGDDPFAIAAGWLAEAEPQEPNDPNAIALATVDAAGLPNVRMVLLKEIEAEAFVFYTNYGSQKAVEIETSGKAAFVLHWKSLRRQIRVRGLVEREEGVQADAYYASRSLKSRLGAWASEQSRPLASRTSLLAEVARVTARFGTNPPRPAFWGGFRIRPLEIEFWADGAFRLHDRFRWRRNSLSDGWSIERLNP.

FMN is bound by residues 48-53, 63-64, K70, and Q92; these read RMVLLK and YT. Residue K53 coordinates substrate. Y110, R114, and S118 together coordinate substrate. Residues 127 to 128 and W171 each bind FMN; that span reads QS. Residue 177–179 participates in substrate binding; it reads RLH. R181 provides a ligand contact to FMN.

It belongs to the pyridoxamine 5'-phosphate oxidase family. As to quaternary structure, homodimer. It depends on FMN as a cofactor.

It carries out the reaction pyridoxamine 5'-phosphate + O2 + H2O = pyridoxal 5'-phosphate + H2O2 + NH4(+). The catalysed reaction is pyridoxine 5'-phosphate + O2 = pyridoxal 5'-phosphate + H2O2. It functions in the pathway cofactor metabolism; pyridoxal 5'-phosphate salvage; pyridoxal 5'-phosphate from pyridoxamine 5'-phosphate: step 1/1. It participates in cofactor metabolism; pyridoxal 5'-phosphate salvage; pyridoxal 5'-phosphate from pyridoxine 5'-phosphate: step 1/1. Its function is as follows. Catalyzes the oxidation of either pyridoxine 5'-phosphate (PNP) or pyridoxamine 5'-phosphate (PMP) into pyridoxal 5'-phosphate (PLP). The polypeptide is Pyridoxine/pyridoxamine 5'-phosphate oxidase (Cereibacter sphaeroides (strain ATCC 17029 / ATH 2.4.9) (Rhodobacter sphaeroides)).